Reading from the N-terminus, the 304-residue chain is Ribonuclease Z (304 aa).

His63, His65, Asp67, His68, His141, Asp208, and His266 together coordinate Zn(2+). Asp67 acts as the Proton acceptor in catalysis.

It belongs to the RNase Z family. As to quaternary structure, homodimer. Zn(2+) serves as cofactor.

The catalysed reaction is Endonucleolytic cleavage of RNA, removing extra 3' nucleotides from tRNA precursor, generating 3' termini of tRNAs. A 3'-hydroxy group is left at the tRNA terminus and a 5'-phosphoryl group is left at the trailer molecule.. Functionally, zinc phosphodiesterase, which displays some tRNA 3'-processing endonuclease activity. Probably involved in tRNA maturation, by removing a 3'-trailer from precursor tRNA. This is Ribonuclease Z from Chlamydia trachomatis serovar L2 (strain ATCC VR-902B / DSM 19102 / 434/Bu).